Consider the following 116-residue polypeptide: Ribonuclease P protein component (116 aa).

Belongs to the RnpA family. Consists of a catalytic RNA component (M1 or rnpB) and a protein subunit.

The catalysed reaction is Endonucleolytic cleavage of RNA, removing 5'-extranucleotides from tRNA precursor.. RNaseP catalyzes the removal of the 5'-leader sequence from pre-tRNA to produce the mature 5'-terminus. It can also cleave other RNA substrates such as 4.5S RNA. The protein component plays an auxiliary but essential role in vivo by binding to the 5'-leader sequence and broadening the substrate specificity of the ribozyme. This is Ribonuclease P protein component from Geobacillus sp. (strain WCH70).